Consider the following 284-residue polypeptide: MAIIMDGKALAVNMQEQLQEKVARLKEKEWIVPGLVVIMVGENPASQVYVRNKERAAKKAGFHSKTVNLSESISEEELIEVIEKYNQDPLFHGILVQLPLPNHINEMRILLAVDPKKDVDGFHPMNTGNLWNGRPQMVPCTPAGIMEILREYNVELEGKTAVIIGRSNIVGKPMAQLLLEKNATVTLTHSRTPHLAKVCNKADVLIVAIGRAKFVTEEFVKEGAVVIDVGINRDEEGKLCGDVDFDQVKEKVSMITPVPGGVGPMTITMLMEQTYQAALRSLKG.

NADP(+) contacts are provided by residues 165 to 167, S190, and I231; that span reads GRS.

Belongs to the tetrahydrofolate dehydrogenase/cyclohydrolase family. Homodimer.

It catalyses the reaction (6R)-5,10-methylene-5,6,7,8-tetrahydrofolate + NADP(+) = (6R)-5,10-methenyltetrahydrofolate + NADPH. The catalysed reaction is (6R)-5,10-methenyltetrahydrofolate + H2O = (6R)-10-formyltetrahydrofolate + H(+). It participates in one-carbon metabolism; tetrahydrofolate interconversion. Catalyzes the oxidation of 5,10-methylenetetrahydrofolate to 5,10-methenyltetrahydrofolate and then the hydrolysis of 5,10-methenyltetrahydrofolate to 10-formyltetrahydrofolate. The sequence is that of Bifunctional protein FolD from Streptococcus thermophilus (strain ATCC BAA-491 / LMD-9).